The following is a 149-amino-acid chain: Glutamyl-tRNA(Gln) amidotransferase subunit C, mitochondrial (149 aa).

This sequence belongs to the GatC family. In terms of assembly, subunit of the heterotrimeric GatCAB amidotransferase (AdT) complex, composed of A, B and C subunits.

It localises to the mitochondrion. The enzyme catalyses L-glutamyl-tRNA(Gln) + L-glutamine + ATP + H2O = L-glutaminyl-tRNA(Gln) + L-glutamate + ADP + phosphate + H(+). In terms of biological role, allows the formation of correctly charged Gln-tRNA(Gln) through the transamidation of misacylated Glu-tRNA(Gln) in the mitochondria. The reaction takes place in the presence of glutamine and ATP through an activated gamma-phospho-Glu-tRNA(Gln). The polypeptide is Glutamyl-tRNA(Gln) amidotransferase subunit C, mitochondrial (Trichoplax adhaerens (Trichoplax reptans)).